Here is a 387-residue protein sequence, read N- to C-terminus: Capsid protein (387 aa).

Residues 1 to 33 are compositionally biased toward basic residues; sequence MARTKSKPRKRTTVRKARRSVKRRTTTKGTKRK. Disordered regions lie at residues 1 to 47 and 365 to 387; these read MART…RGVA and KSAKINDQLNNNQDAANKKREFN. 2 consecutive short sequence motifs (nuclear localization signal) follow at residues 8–15 and 30–37; these read PRKRTTVR and TKRKTAGD. A compositionally biased stretch (low complexity) spans 370–379; it reads NDQLNNNQDA.

Its subcellular location is the host nucleus. It localises to the virion. In terms of biological role, self-assembles to form the virion icosahedral capsid. In Chaetoceros protobacilladnavirus 2 (Chaetoceros sp. DNA virus 7), this protein is Capsid protein.